The primary structure comprises 229 residues: Potassium/proton antiporter CemA (229 aa).

Helical transmembrane passes span 6–26, 107–127, and 189–209; these read AFIP…ISLC, ILHF…SFWG, and ILSG…KYWI.

It belongs to the CemA family.

Its subcellular location is the plastid. It localises to the chloroplast inner membrane. The catalysed reaction is K(+)(in) + H(+)(out) = K(+)(out) + H(+)(in). Functionally, contributes to K(+)/H(+) antiport activity by supporting proton efflux to control proton extrusion and homeostasis in chloroplasts in a light-dependent manner to modulate photosynthesis. Prevents excessive induction of non-photochemical quenching (NPQ) under continuous-light conditions. Indirectly promotes efficient inorganic carbon uptake into chloroplasts. This Arabis hirsuta (Hairy rock-cress) protein is Potassium/proton antiporter CemA.